A 271-amino-acid chain; its full sequence is Co-chaperone protein DjlA (271 aa).

Topologically, residues 1–6 (MQYWGK) are periplasmic. Residues 7 to 31 (IIGVAVALLMGGGFWGVVLGLLIGH) form a helical membrane-spanning segment. At 32–271 (MFDKARSRKM…ELIKQQKGFK (240 aa)) the chain is on the cytoplasmic side. The 67-residue stretch at 205–271 (DACNVLGVKP…ELIKQQKGFK (67 aa)) folds into the J domain.

In terms of assembly, homodimer.

The protein localises to the cell inner membrane. Its function is as follows. Regulatory DnaK co-chaperone. Direct interaction between DnaK and DjlA is needed for the induction of the wcaABCDE operon, involved in the synthesis of a colanic acid polysaccharide capsule, possibly through activation of the RcsB/RcsC phosphotransfer signaling pathway. The colanic acid capsule may help the bacterium survive conditions outside the host. This chain is Co-chaperone protein DjlA, found in Escherichia coli (strain K12).